Consider the following 477-residue polypeptide: MISLDLSPTLWKSPDKEGELKKQGHVVKNWKKRKFIIQNDMLFYFKDKEERPVGAVPLRMSRCYENKSLGKPNCFELVSPRINKTFFIQANTPDEMASWMKAVEKGSEYSTVSQPFNLKHEVHVDFNSATGFSGLPKEWEVILKSSNVSKQEVLDKPSEWLSVLEFQAGRTMEKSNSQNLSALPDESNLTLSDLVTKEDPTKIYKNMTKIGEGAAGEVFVATSSKNNKRVAIKKIEINNDNAKLLVTEIAIMKTSHHDNIVNYIDSYIVNDRELWVAMEFMGGGCLTDILEAFDNIKMSEIQIAYVVKETLKALQYIHSLHRIHRDIKSDNILLGSEGSVKIADFGYAAQLTQKQQKRNTVVGTPYWMAPELIRGHDYGVKVDIWSLGIMMMEMAEGEPPYMDFPPLRALFLITTKGIPPLKETTKWSKTFQDFFSKCLDINVANRPDATDLLKHPFMDLACDSSEFKPLIQAARNV.

In terms of domain architecture, PH spans 13–108; sequence SPDKEGELKK…WMKAVEKGSE (96 aa). The CRIB domain maps to 112–125; it reads VSQPFNLKHEVHVD. The Protein kinase domain maps to 204–458; the sequence is YKNMTKIGEG…ATDLLKHPFM (255 aa). ATP-binding positions include 210–218 and K233; that span reads IGEGAAGEV. The active-site Proton acceptor is the D326.

This sequence belongs to the protein kinase superfamily. STE Ser/Thr protein kinase family. STE20 subfamily. In terms of assembly, interacts with GTP-bound racB. The cofactor is Mg(2+).

It is found in the cytoplasm. The protein localises to the membrane. It catalyses the reaction L-seryl-[protein] + ATP = O-phospho-L-seryl-[protein] + ADP + H(+). The enzyme catalyses L-threonyl-[protein] + ATP = O-phospho-L-threonyl-[protein] + ADP + H(+). Its activity is regulated as follows. Kinase activity is rapidly and transiently increased in response to chemoattractant stimulation. Functionally, has role in the regulation of chemotaxis. The protein is Serine/threonine-protein kinase pakC (pakC) of Dictyostelium discoideum (Social amoeba).